Consider the following 66-residue polypeptide: Large ribosomal subunit protein bL31 (66 aa).

Zn(2+)-binding residues include C16, C18, C36, and C39.

This sequence belongs to the bacterial ribosomal protein bL31 family. Type A subfamily. In terms of assembly, part of the 50S ribosomal subunit. Zn(2+) serves as cofactor.

Its function is as follows. Binds the 23S rRNA. This chain is Large ribosomal subunit protein bL31, found in Desulforamulus reducens (strain ATCC BAA-1160 / DSM 100696 / MI-1) (Desulfotomaculum reducens).